The following is a 198-amino-acid chain: MEKPAGRKKKTPTPREEADVQKSALREEKVSGDRKPPERPTVPRKPRTEPCLSPEDEEHVFDAFDASFKDDFEGVPVFIPFQRKKPYECSECGRIFKHKTDHIRHQRVHTGEKPFKCAQCGKAFRHSSDVTKHQRTHTGEKPFKCGECGKAFNCGSNLLKHQKTHTGEKPYECTHCGKAFAYSSCLIRHQKRHPRKKP.

Positions 1-12 (MEKPAGRKKKTP) are enriched in basic residues. Residues 1–55 (MEKPAGRKKKTPTPREEADVQKSALREEKVSGDRKPPERPTVPRKPRTEPCLSPE) are disordered. Residues 13 to 38 (TPREEADVQKSALREEKVSGDRKPPE) show a composition bias toward basic and acidic residues. 4 C2H2-type zinc fingers span residues 87–109 (YECS…QRVH), 115–137 (FKCA…QRTH), 143–165 (FKCG…QKTH), and 171–193 (YECT…QKRH).

It belongs to the krueppel C2H2-type zinc-finger protein family.

The protein localises to the nucleus. A putative DNA-binding regulatory protein associated with meiosis in spermatogenesis. The polypeptide is Zinc finger protein 41 homolog (ZFP41) (Homo sapiens (Human)).